The primary structure comprises 339 residues: Cytochrome c biogenesis protein CcsA (339 aa).

7 helical membrane passes run 6–26 (LEHI…LVFW), 37–57 (IGSL…GLLL), 71–91 (LYES…VSEI), 97–117 (WLGI…TVGL), 142–162 (MMIP…ALLI), 247–267 (IISL…VWVN), and 281–299 (TWAL…IRMI).

It belongs to the CcmF/CycK/Ccl1/NrfE/CcsA family. As to quaternary structure, may interact with Ccs1.

It localises to the plastid. Its subcellular location is the chloroplast thylakoid membrane. Functionally, required during biogenesis of c-type cytochromes (cytochrome c6 and cytochrome f) at the step of heme attachment. The protein is Cytochrome c biogenesis protein CcsA of Anthoceros angustus (Hornwort).